A 279-amino-acid chain; its full sequence is Glutamate racemase (279 aa).

Substrate is bound by residues 13-14 (DS) and 45-46 (YG). Cys76 acts as the Proton donor/acceptor in catalysis. 77–78 (NT) contacts substrate. The active-site Proton donor/acceptor is the Cys185. 186 to 187 (TH) lines the substrate pocket.

The protein belongs to the aspartate/glutamate racemases family.

The enzyme catalyses L-glutamate = D-glutamate. The protein operates within cell wall biogenesis; peptidoglycan biosynthesis. Its function is as follows. Provides the (R)-glutamate required for cell wall biosynthesis. In Synechocystis sp. (strain ATCC 27184 / PCC 6803 / Kazusa), this protein is Glutamate racemase.